A 100-amino-acid polypeptide reads, in one-letter code: Aspartyl/glutamyl-tRNA(Asn/Gln) amidotransferase subunit C (100 aa).

Belongs to the GatC family. Heterotrimer of A, B and C subunits.

The enzyme catalyses L-glutamyl-tRNA(Gln) + L-glutamine + ATP + H2O = L-glutaminyl-tRNA(Gln) + L-glutamate + ADP + phosphate + H(+). It catalyses the reaction L-aspartyl-tRNA(Asn) + L-glutamine + ATP + H2O = L-asparaginyl-tRNA(Asn) + L-glutamate + ADP + phosphate + 2 H(+). Functionally, allows the formation of correctly charged Asn-tRNA(Asn) or Gln-tRNA(Gln) through the transamidation of misacylated Asp-tRNA(Asn) or Glu-tRNA(Gln) in organisms which lack either or both of asparaginyl-tRNA or glutaminyl-tRNA synthetases. The reaction takes place in the presence of glutamine and ATP through an activated phospho-Asp-tRNA(Asn) or phospho-Glu-tRNA(Gln). The sequence is that of Aspartyl/glutamyl-tRNA(Asn/Gln) amidotransferase subunit C from Staphylococcus carnosus (strain TM300).